The primary structure comprises 215 residues: DNA repair and recombination protein RadB (215 aa).

The protein belongs to the eukaryotic RecA-like protein family. RadB subfamily.

In terms of biological role, involved in DNA repair and in homologous recombination. May regulate the cleavage reactions of the branch-structured DNA. Has a very weak ATPase activity that is not stimulated by DNA. Binds DNA but does not promote DNA strands exchange. This Methanococcus maripaludis (strain C7 / ATCC BAA-1331) protein is DNA repair and recombination protein RadB.